We begin with the raw amino-acid sequence, 541 residues long: Acyl-CoA ligase M9 (541 aa).

186-197 (AMSTSGTTGLPK) lines the AMP pocket. The tract at residues 445–519 (ELEAVLHQMP…DSLPRNSSGK (75 aa)) is AMP-binding.

The protein belongs to the ATP-dependent AMP-binding enzyme family.

It participates in secondary metabolite biosynthesis. Functionally, acyl-CoA ligase; part of the gene cluster that mediates the biosynthesis of squalestatin S1 (SQS1, also known as zaragozic acid A), a heavily oxidized fungal polyketide that offers potent cholesterol lowering activity by targeting squalene synthase (SS). SQS1 is composed of a 2,8-dioxobicyclic[3.2.1]octane-3,4,5-tricarboxyclic acid core that is connected to two lipophilic polyketide arms. These initial steps feature the priming of an unusual benzoic acid starter unit onto the highly reducing polyketide synthase pks2, followed by oxaloacetate extension and product release to generate a tricarboxylic acid containing product. The phenylalanine ammonia lyase (PAL) M7 and the acyl-CoA ligase M9 are involved in transforming phenylalanine into benzoyl-CoA. The citrate synthase-like protein R3 is involved in connecting the C-alpha-carbons of the hexaketide chain and oxaloacetate to afford the tricarboxylic acid unit. The potential hydrolytic enzymes, M8 and M10, are in close proximity to pks2 and may participate in product release. On the other side, the tetraketide arm is synthesized by a the squalestatin tetraketide synthase pks1 and enzymatically esterified to the core in the last biosynthetic step, by the acetyltransferase M4. The biosynthesis of the tetraketide must involve 3 rounds of chain extension. After the first and second rounds methyl-transfer occurs, and in all rounds of extension the ketoreductase and dehydratase are active. The enoyl reductase and C-MeT of pks1 are not active in the final round of extension. The acetyltransferase M4 appears to have a broad substrate selectivity for its acyl CoA substrate, allowing the in vitro synthesis of novel squalestatins. The biosynthesis of SQS1 requires several oxidative steps likely performed by oxidoreductases M1, R1 and R2. Finally, in support of the identification of the cluster as being responsible for SQS1 production, the cluster contains a gene encoding a putative squalene synthase (SS) R6, suggesting a likely mechanism for self-resistance. This is Acyl-CoA ligase M9 from Phoma sp. (strain ATCC 20986 / MF5453).